The primary structure comprises 368 residues: Methionine import ATP-binding protein MetN (368 aa).

In terms of domain architecture, ABC transporter spans isoleucine 5–isoleucine 260. An ATP-binding site is contributed by glycine 41–serine 48.

The protein belongs to the ABC transporter superfamily. Methionine importer (TC 3.A.1.24) family. As to quaternary structure, the complex is composed of two ATP-binding proteins (MetN), two transmembrane proteins (MetI) and a solute-binding protein (MetQ).

Its subcellular location is the cell membrane. The enzyme catalyses L-methionine(out) + ATP + H2O = L-methionine(in) + ADP + phosphate + H(+). It catalyses the reaction D-methionine(out) + ATP + H2O = D-methionine(in) + ADP + phosphate + H(+). Part of the ABC transporter complex MetNIQ involved in methionine import. Responsible for energy coupling to the transport system. The polypeptide is Methionine import ATP-binding protein MetN (Lactococcus lactis subsp. cremoris (strain MG1363)).